A 291-amino-acid polypeptide reads, in one-letter code: Acetylglutamate kinase (291 aa).

Substrate-binding positions include Gly-64–Gly-65, Arg-86, and Asn-190.

It belongs to the acetylglutamate kinase family. ArgB subfamily.

Its subcellular location is the cytoplasm. The catalysed reaction is N-acetyl-L-glutamate + ATP = N-acetyl-L-glutamyl 5-phosphate + ADP. It functions in the pathway amino-acid biosynthesis; L-arginine biosynthesis; N(2)-acetyl-L-ornithine from L-glutamate: step 2/4. Catalyzes the ATP-dependent phosphorylation of N-acetyl-L-glutamate. In Leptospira borgpetersenii serovar Hardjo-bovis (strain JB197), this protein is Acetylglutamate kinase.